Here is a 687-residue protein sequence, read N- to C-terminus: Polyphosphate kinase (687 aa).

Residue Asn45 participates in ATP binding. Positions 375 and 405 each coordinate Mg(2+). His435 acts as the Phosphohistidine intermediate in catalysis. Tyr472, Arg568, and His596 together coordinate ATP.

This sequence belongs to the polyphosphate kinase 1 (PPK1) family. Mg(2+) is required as a cofactor. Post-translationally, an intermediate of this reaction is the autophosphorylated ppk in which a phosphate is covalently linked to a histidine residue through a N-P bond.

It carries out the reaction [phosphate](n) + ATP = [phosphate](n+1) + ADP. Its function is as follows. Catalyzes the reversible transfer of the terminal phosphate of ATP to form a long-chain polyphosphate (polyP). This is Polyphosphate kinase from Burkholderia lata (strain ATCC 17760 / DSM 23089 / LMG 22485 / NCIMB 9086 / R18194 / 383).